Consider the following 173-residue polypeptide: Secreted RxLR effector protein RXLR-C12 (173 aa).

Residues 1-18 (MLQFATAFLAISANVVMT) form the signal peptide. The RxLR-dEER signature appears at 41–55 (RRLRTHEIGTVPEER). An N-linked (GlcNAc...) asparagine glycan is attached at asparagine 155.

It belongs to the RxLR effector family.

The protein resides in the secreted. It localises to the host cytoplasm. It is found in the host nucleus. Functionally, secreted effector that suppresses pattern-triggered immunity (PTI) in plant host. This Plasmopara halstedii (Downy mildew of sunflower) protein is Secreted RxLR effector protein RXLR-C12.